Here is a 246-residue protein sequence, read N- to C-terminus: Probable transcriptional regulatory protein NT01CX_1819 (246 aa).

It belongs to the TACO1 family.

Its subcellular location is the cytoplasm. The sequence is that of Probable transcriptional regulatory protein NT01CX_1819 from Clostridium novyi (strain NT).